The sequence spans 538 residues: Probable folate-biopterin transporter 9, chloroplastic (538 aa).

A chloroplast-targeting transit peptide spans methionine 1 to serine 57. 12 consecutive transmembrane segments (helical) span residues valine 85–leucine 105, leucine 129–alanine 149, valine 152–phenylalanine 172, valine 178–valine 198, alanine 220–leucine 240, isoleucine 246–lysine 266, leucine 309–tyrosine 329, serine 339–tyrosine 359, alanine 370–valine 390, leucine 395–leucine 415, leucine 447–isoleucine 467, and isoleucine 479–leucine 499.

This sequence belongs to the major facilitator superfamily. Folate-biopterin transporter (TC 2.A.71) family.

Its subcellular location is the plastid. It localises to the chloroplast membrane. In terms of biological role, could mediate folate transport. The chain is Probable folate-biopterin transporter 9, chloroplastic from Arabidopsis thaliana (Mouse-ear cress).